A 175-amino-acid polypeptide reads, in one-letter code: Outer membrane protein assembly factor BamE (175 aa).

The signal sequence occupies residues 1-21; it reads MQNTKLLLTSFTFVGLLALAG. Residue Cys22 is the site of N-palmitoyl cysteine attachment. Residue Cys22 is the site of S-diacylglycerol cysteine attachment. Disordered regions lie at residues 117–147 and 156–175; these read ALLGKDSGTNVTAPAQEAEKPKSEVPAKPGS and IDNVETVPVPTPEPLDTSPQ.

It belongs to the BamE family. In terms of assembly, part of the Bam complex.

It localises to the cell outer membrane. In terms of biological role, part of the outer membrane protein assembly complex, which is involved in assembly and insertion of beta-barrel proteins into the outer membrane. May have a structural role in maintaining the cell envelope integrity. In Pseudomonas fluorescens, this protein is Outer membrane protein assembly factor BamE.